Reading from the N-terminus, the 169-residue chain is Small ribosomal subunit protein uS5c (169 aa).

The S5 DRBM domain occupies 17–80 (WQERVIQVRR…TDGRKNLINI (64 aa)).

It belongs to the universal ribosomal protein uS5 family. As to quaternary structure, part of the 30S ribosomal subunit. Contacts protein S4.

It localises to the plastid. It is found in the chloroplast. Functionally, with S4 and S12 plays an important role in translational accuracy. This chain is Small ribosomal subunit protein uS5c (rps5), found in Guillardia theta (Cryptophyte).